A 129-amino-acid chain; its full sequence is Small ribosomal subunit protein bS6 (129 aa).

The segment at 100–129 (SIMLKQKEERAPRREERSEAKPEAKSEAAE) is disordered. A compositionally biased stretch (basic and acidic residues) spans 104–129 (KQKEERAPRREERSEAKPEAKSEAAE).

It belongs to the bacterial ribosomal protein bS6 family.

Binds together with bS18 to 16S ribosomal RNA. The chain is Small ribosomal subunit protein bS6 from Vibrio parahaemolyticus serotype O3:K6 (strain RIMD 2210633).